Consider the following 177-residue polypeptide: Small ribosomal subunit protein uS5 (177 aa).

The 64-residue stretch at 19–82 folds into the S5 DRBM domain; that stretch reads WQERVVQIRR…ADGKKQLVEV (64 aa).

The protein belongs to the universal ribosomal protein uS5 family. Part of the 30S ribosomal subunit. Contacts proteins S4 and S8.

In terms of biological role, with S4 and S12 plays an important role in translational accuracy. Functionally, located at the back of the 30S subunit body where it stabilizes the conformation of the head with respect to the body. This Acaryochloris marina (strain MBIC 11017) protein is Small ribosomal subunit protein uS5.